Here is a 156-residue protein sequence, read N- to C-terminus: Ribosomal RNA large subunit methyltransferase H (156 aa).

S-adenosyl-L-methionine is bound by residues Leu-74, Gly-105, and 124–129 (LSKLTL).

Belongs to the RNA methyltransferase RlmH family. In terms of assembly, homodimer.

Its subcellular location is the cytoplasm. It carries out the reaction pseudouridine(1915) in 23S rRNA + S-adenosyl-L-methionine = N(3)-methylpseudouridine(1915) in 23S rRNA + S-adenosyl-L-homocysteine + H(+). Specifically methylates the pseudouridine at position 1915 (m3Psi1915) in 23S rRNA. The sequence is that of Ribosomal RNA large subunit methyltransferase H from Legionella pneumophila (strain Paris).